A 229-amino-acid chain; its full sequence is Large ribosomal subunit protein uL1 (229 aa).

The protein belongs to the universal ribosomal protein uL1 family. Part of the 50S ribosomal subunit.

In terms of biological role, binds directly to 23S rRNA. The L1 stalk is quite mobile in the ribosome, and is involved in E site tRNA release. Functionally, protein L1 is also a translational repressor protein, it controls the translation of the L11 operon by binding to its mRNA. This Enterococcus faecalis (strain ATCC 700802 / V583) protein is Large ribosomal subunit protein uL1.